The sequence spans 272 residues: Golgi to ER traffic protein 5 (272 aa).

Disordered stretches follow at residues 1 to 35 and 85 to 105; these read MSTV…HSGT and LHAP…PGSS. The 91-residue stretch at 108-198 folds into the Ubiquitin-like domain; it reads ITVHLKSARN…VEFGVMIIGG (91 aa). The interval 212 to 231 is disordered; that stretch reads SAEQKESYEPPKPAVGPSGE.

It belongs to the GET5 family. Forms homodimers via its C-terminal domain. Component of the get4/get5/sgt2 sorting complex. Binds directly sgt12 homodimers.

It localises to the cytoplasm. Component of the get4/get5/sgt2 sorting complex involved in the GET (guided entry of TA proteins) pathway that leads to the insertion of tail-anchored (TA) proteins into the endoplasmic reticulum. Get4 and get5 form an obligate complex that catalyzes the transfer of tail-anchored proteins destined to the endoplasmic reticulum from sgt2 to the cytosolic targeting factor which then targets the TA protein to the ER membrane via get1/get2. This chain is Golgi to ER traffic protein 5, found in Aspergillus fumigatus (strain ATCC MYA-4609 / CBS 101355 / FGSC A1100 / Af293) (Neosartorya fumigata).